Here is a 441-residue protein sequence, read N- to C-terminus: Chromatin structure-remodeling complex subunit SFH1 (441 aa).

Acidic residues predominate over residues 124-137 (DFDANDFEDDDDDD). 2 disordered regions span residues 124–183 (DFDA…AAPP) and 383–407 (EMTPEEMQKREMERDRSSRRLKRES). Composition is skewed to basic and acidic residues over residues 138 to 147 (QSQRESRDGS) and 155 to 166 (DGTKKEEQDKFA).

It belongs to the SNF5 family.

It is found in the nucleus. In terms of biological role, part of the chromatin structure-remodeling complex (RSC) which is involved in transcription regulation and nucleosome positioning. RSC is responsible for the transfer of a histone octamer from a nucleosome core particle to naked DNA. The reaction requires ATP and involves an activated RSC-nucleosome intermediate. Remodeling reaction also involves DNA translocation, DNA twist and conformational change. As a reconfigurer of centromeric and flanking nucleosomes, RSC complex is required both for proper kinetochore function in chromosome segregation and, via a PKC1-dependent signaling pathway, for organization of the cellular cytoskeleton. This subunit is essential for mitotic growth and required for cell cycle progression. The sequence is that of Chromatin structure-remodeling complex subunit SFH1 (SFH1) from Yarrowia lipolytica (strain CLIB 122 / E 150) (Yeast).